Reading from the N-terminus, the 212-residue chain is Hevein-like preproprotein (212 aa).

An N-terminal signal peptide occupies residues 1-21; the sequence is MKIRLSITIILLSYTVATVAG. Residues 22 to 64 enclose the Chitin-binding type-1 domain; the sequence is QQCGRQGGGRTCPGNICCSQYGYCGTTADYCSPTNNCQSNCWG. 7 disulfide bridges follow: C24/C39, C33/C45, C38/C52, C58/C62, C100/C132, C121/C155, and C135/C191. The Barwin domain occupies 72–193; the sequence is ESASNVRATY…VDYQFVDCGN (122 aa).

As to quaternary structure, CB-HEL interacts strongly with a fungal fruiting body lectin.

It is found in the vacuole. Fungal growth inhibitors. Neither CB-HEL nor CD-HEL have chitinase activity, but both have antimicrobial activities. CD-HEL has RNase, but no DNase activity. The polypeptide is Hevein-like preproprotein (HEL) (Arabidopsis thaliana (Mouse-ear cress)).